The sequence spans 488 residues: MTVLYQNRQIRELERLAVESGISEYELMCRAGEAAFKALLARWPEAQEITVCCGKGNNGGDGLVLARLAYENGLKVTVYLAGQRHQLKGAAAQAANACEASNLPILPFPEPLLFKGEVIVDALLGSGLSGEVKAPYDHLIAAINQAGQYVLALDVPSGINVDSGEVQGTAVKANLTVTFIAPKRGLYTDKAPAYCGELIVDRLGLSESFFRAVFTDTRLLEWKGVFPLLPKRARDAHKGSYGHVLVIGGDYGMGGAVRMAAEAAARVGAGLVTVATRPEHVPIVSGPRPELMCHQVAAADDLKPLLTAATVVVIGPGLGKSDWAKSLLNKVLETDLPKVLDADSLNLLAESPSQREDWILTPHPGEASRLLGISCNEVQRDRFQAINDLQEKYQGVLVLKGVGTLIKDESQAYYVCPAGNPGMATGGMGDILSGIIGGLVAQRLSLASAAQAGVFIHSMAADRAAEEGGERGLLATDLFPHLRVLVNP.

The NAD(P)H-hydrate epimerase stretch occupies residues 1–214; the sequence is MTVLYQNRQI…LSESFFRAVF (214 aa). Positions 10 to 211 constitute a YjeF N-terminal domain; the sequence is IRELERLAVE…RLGLSESFFR (202 aa). The tract at residues 57–61 is NADPHX 1; for epimerase activity; the sequence is NNGGD. K(+) is bound by residues asparagine 58 and aspartate 121. Residues 125–131 form an NADPHX 1; for epimerase activity region; sequence GSGLSGE. Positions 136 and 154 each coordinate (6S)-NADPHX. Serine 157 is a K(+) binding site. The YjeF C-terminal domain maps to 221-488; that stretch reads EWKGVFPLLP…FPHLRVLVNP (268 aa). The ADP-dependent (S)-NAD(P)H-hydrate dehydratase stretch occupies residues 221–488; it reads EWKGVFPLLP…FPHLRVLVNP (268 aa). Glycine 317 provides a ligand contact to (6S)-NADPHX. An NADPHX 2; for dehydratase activity region spans residues 363-369; the sequence is HPGEASR. Residues 400 to 404 and 420 to 429 contribute to the ADP site; these read KGVGT and NPGMATGGMG. Residue aspartate 430 participates in (6S)-NADPHX binding.

It in the N-terminal section; belongs to the NnrE/AIBP family. The protein in the C-terminal section; belongs to the NnrD/CARKD family. It depends on K(+) as a cofactor.

The enzyme catalyses (6S)-NADHX + ADP = AMP + phosphate + NADH + H(+). The catalysed reaction is (6S)-NADPHX + ADP = AMP + phosphate + NADPH + H(+). It carries out the reaction (6R)-NADHX = (6S)-NADHX. It catalyses the reaction (6R)-NADPHX = (6S)-NADPHX. Functionally, bifunctional enzyme that catalyzes the epimerization of the S- and R-forms of NAD(P)HX and the dehydration of the S-form of NAD(P)HX at the expense of ADP, which is converted to AMP. This allows the repair of both epimers of NAD(P)HX, a damaged form of NAD(P)H that is a result of enzymatic or heat-dependent hydration. This is Bifunctional NAD(P)H-hydrate repair enzyme Nnr (nnr) from Coxiella burnetii (strain RSA 493 / Nine Mile phase I).